A 350-amino-acid polypeptide reads, in one-letter code: MQTYGNPNPTYGWWAGNAGTTNRSGKFLAAHIAHTGLMAFWAGSFTLFELSRYDPSVPMGHQPLVALPHLATLGIGVGDGGVITDTYPIVVTAVLHLVLSMVYAAGGLMHSLLFNGDIGEMGVKWARKFDFKWDDPDKLTFILGHHLFLLGLGNVQFVEWAKYYGLYDNAEGVVRTVVPNLNIGMVWNAQFNFLAINSLEDVMGGHAFLALFMMSGGLWHIVTKQAGEYTTFKGKGILSAEAQLSWALAGVGWMALVAAFWCASNTTIYPDTFFGEVLDLKFSISPYWVDTANLPEGTYTSRAWLTNIHYYLGFFYIQGHLWHALRALGFDFKRVSNAIGNADSATITLN.

6 consecutive transmembrane segments (helical) span residues F27–L47, I89–M109, F141–A161, V202–V222, L244–S264, and L305–L325.

This sequence belongs to the PsbB/PsbC family. IsiA/Pcb subfamily. As to quaternary structure, the antenna complex consists of divinyl chlorophylls (a and b) and divinyl chlorophyll a/b binding proteins. Under iron-starvation forms a complex with PSI, consisting of a PSI trimer surrounded by a ring composed of 18 PcbB subunits. Requires divinyl chlorophyll a as cofactor. Divinyl chlorophyll b is required as a cofactor.

The protein resides in the cellular thylakoid membrane. Its function is as follows. The antenna complex functions as a light receptor, it captures and delivers excitation energy to photosystems I. The Prochlorales pcb genes are not related to higher plant LHCs. This Prochlorococcus marinus (strain MIT 9313) protein is Divinyl chlorophyll a/b light-harvesting protein PcbB (pcbB).